Consider the following 406-residue polypeptide: Probable endo-xylogalacturonan hydrolase A (406 aa).

The signal sequence occupies residues 1-18; it reads MTLYRNLLLLASLGLSYA. N-linked (GlcNAc...) asparagine glycosylation is present at Asn84. PbH1 repeat units lie at residues 183–213 and 214–235; these read ATNV…DIGE and STYV…ALKP. Residue Asp228 is the Proton donor of the active site. Residue His251 is part of the active site. 3 PbH1 repeats span residues 266–289, 299–320, and 333–375; these read VKNI…KTYP, VSNV…QIQS, and PGNA…SISG. N-linked (GlcNAc...) asparagine glycans are attached at residues Asn278 and Asn301.

The protein belongs to the glycosyl hydrolase 28 family.

The protein localises to the secreted. Its function is as follows. Pectinolytic enzyme involved in the degradation of xylogalacturonan (xga), a galacturonan backbone heavily substituted with xylose, and which is one important component of the hairy regions of pectin. Activity requires a galacturonic acid backbone substituted with xylose. The polypeptide is Probable endo-xylogalacturonan hydrolase A (xghA) (Aspergillus niger (strain ATCC MYA-4892 / CBS 513.88 / FGSC A1513)).